Consider the following 663-residue polypeptide: Alpha-1,4-glucan:maltose-1-phosphate maltosyltransferase (663 aa).

Residues isoleucine 238–phenylalanine 266 are disordered. The alpha-maltose 1-phosphate site is built by lysine 244, glutamine 309, and aspartate 344. Aspartate 380 serves as the catalytic Nucleophile. Position 381 (asparagine 381) interacts with alpha-maltose 1-phosphate. Glutamate 409 functions as the Proton donor in the catalytic mechanism. Lysine 521 to tyrosine 522 is a binding site for alpha-maltose 1-phosphate.

Belongs to the glycosyl hydrolase 13 family. GlgE subfamily. As to quaternary structure, homodimer.

The catalysed reaction is alpha-maltose 1-phosphate + [(1-&gt;4)-alpha-D-glucosyl](n) = [(1-&gt;4)-alpha-D-glucosyl](n+2) + phosphate. Its function is as follows. Maltosyltransferase that uses maltose 1-phosphate (M1P) as the sugar donor to elongate linear or branched alpha-(1-&gt;4)-glucans. Is involved in a branched alpha-glucan biosynthetic pathway from trehalose, together with TreS, Mak and GlgB. This chain is Alpha-1,4-glucan:maltose-1-phosphate maltosyltransferase, found in Salinibacter ruber (strain DSM 13855 / M31).